The chain runs to 468 residues: Methionine aminopeptidase 2 (468 aa).

Basic and acidic residues predominate over residues 1 to 10 (MGSKTFEGEG). The tract at residues 1-106 (MGSKTFEGEG…PPRVPLDDLF (106 aa)) is disordered. The segment covering 16 to 25 (DPSNSTSPNS) has biased composition (polar residues). Positions 31 to 40 (RGAHLSRDGD) are enriched in basic and acidic residues. Over residues 46–56 (GDGDDGADGDE) the composition is skewed to acidic residues. Over residues 61-75 (VTTTPLTEQQPSSET) the composition is skewed to polar residues. Basic residues predominate over residues 78–90 (KKKKRRKPKKKIS). A substrate-binding site is contributed by histidine 219. A divalent metal cation is bound by residues aspartate 240, aspartate 251, and histidine 320. Histidine 328 is a binding site for substrate. Residues glutamate 353 and glutamate 449 each contribute to the a divalent metal cation site.

The protein belongs to the peptidase M24A family. Methionine aminopeptidase eukaryotic type 2 subfamily. The cofactor is Co(2+). Zn(2+) serves as cofactor. It depends on Mn(2+) as a cofactor. Requires Fe(2+) as cofactor.

The protein resides in the cytoplasm. The enzyme catalyses Release of N-terminal amino acids, preferentially methionine, from peptides and arylamides.. Functionally, cotranslationally removes the N-terminal methionine from nascent proteins. The N-terminal methionine is often cleaved when the second residue in the primary sequence is small and uncharged (Met-Ala-, Cys, Gly, Pro, Ser, Thr, or Val). In Aspergillus oryzae (strain ATCC 42149 / RIB 40) (Yellow koji mold), this protein is Methionine aminopeptidase 2.